The sequence spans 612 residues: Bile salt-activated lipase (612 aa).

The N-terminal stretch at 1–20 (MGRLEVLFLGLTCCLAAACA) is a signal peptide. A disulfide bridge connects residues C84 and C100. An N-linked (GlcNAc...) asparagine glycan is attached at N207. The active-site Acyl-ester intermediate is S214. C266 and C277 are joined by a disulfide. Catalysis depends on charge relay system residues D340 and H455. Residues 553–612 (VGDHTPPEDDSEAAPVPPTDDSQGGPVPPTDDSQTTPVPPTDNSQAGDSVEAQMPGPIGF) form a disordered region. 4 consecutive repeat copies span residues 556 to 566 (HTPPEDDSEAA), 567 to 577 (PVPPTDDSQGG), 578 to 588 (PVPPTDDSQTT), and 589 to 599 (PVPPTDNSQAG). The 4 X 11 AA tandem repeats, O-glycosylated region stretch occupies residues 556-599 (HTPPEDDSEAAPVPPTDDSQGGPVPPTDDSQTTPVPPTDNSQAG). Residues 583 to 599 (DDSQTTPVPPTDNSQAG) show a composition bias toward polar residues.

It belongs to the type-B carboxylesterase/lipase family. Interacts with CLC. In terms of tissue distribution, synthesized primarily in the pancreas and then transported to the intestine.

It localises to the secreted. The enzyme catalyses a triacylglycerol + H2O = a diacylglycerol + a fatty acid + H(+). It catalyses the reaction 1,2,3-tri-(9Z-octadecenoyl)-glycerol + H2O = di-(9Z)-octadecenoylglycerol + (9Z)-octadecenoate + H(+). The catalysed reaction is 1,2,3-trioctanoylglycerol + H2O = dioctanoylglycerol + octanoate + H(+). It carries out the reaction a sterol ester + H2O = a sterol + a fatty acid + H(+). The enzyme catalyses cholesteryl (9Z-octadecenoate) + H2O = cholesterol + (9Z)-octadecenoate + H(+). It catalyses the reaction an acetyl ester + H2O = an aliphatic alcohol + acetate + H(+). The catalysed reaction is a butanoate ester + H2O = an aliphatic alcohol + butanoate + H(+). It carries out the reaction 9-hexadecanoyloxy-octadecanoate + H2O = 9-hydroxy-octadecanoate + hexadecanoate + H(+). The enzyme catalyses 9-(9Z-octadecenoyloxy)-octadecanoate + H2O = 9-hydroxy-octadecanoate + (9Z)-octadecenoate + H(+). It catalyses the reaction 1-hexadecanoyl-sn-glycero-3-phosphocholine + H2O = sn-glycerol 3-phosphocholine + hexadecanoate + H(+). The catalysed reaction is 12-hexadecanoyloxy-octadecanoate + H2O = 12-hydroxyoctadecanoate + hexadecanoate + H(+). It carries out the reaction 12-(9Z-octadecenoyloxy)-octadecanoate + H2O = 12-hydroxyoctadecanoate + (9Z)-octadecenoate + H(+). The enzyme catalyses 13-(9Z-octadecenoyloxy)-octadecanoate + H2O = 13-hydroxy-octadecanoate + (9Z)-octadecenoate + H(+). It catalyses the reaction 9-(9Z-hexadecenoyloxy)-octadecanoate + H2O = (9Z)-hexadecenoate + 9-hydroxy-octadecanoate + H(+). The catalysed reaction is 12-(9Z-hexadecenoyloxy)-octadecanoate + H2O = 12-hydroxyoctadecanoate + (9Z)-hexadecenoate + H(+). It carries out the reaction 13-(9Z-hexadecenoyloxy)-octadecanoate + H2O = 13-hydroxy-octadecanoate + (9Z)-hexadecenoate + H(+). The enzyme catalyses 12-octadecanoyloxy-octadecanoate + H2O = 12-hydroxyoctadecanoate + octadecanoate + H(+). It catalyses the reaction 13-octadecanoyloxy-octadecanoate + H2O = 13-hydroxy-octadecanoate + octadecanoate + H(+). The catalysed reaction is 5-(9Z-hexadecenoyloxy)-octadecanoate + H2O = 5-hydroxy-octadecanoate + (9Z)-hexadecenoate + H(+). It carries out the reaction 9-octadecanoyloxy-octadecanoate + H2O = 9-hydroxy-octadecanoate + octadecanoate + H(+). With respect to regulation, activated by bile salts such as sodium taurocholate. Its function is as follows. Catalyzes the hydrolysis of a wide range of substrates including cholesteryl esters, phospholipids, lysophospholipids, di- and tri-acylglycerols, and fatty acid esters of hydroxy fatty acids (FAHFA). Preferentially hydrolyzes FAHFAs with the ester bond further away from the carboxylate. Unsaturated FAHFAs are hydrolyzed more quickly than saturated FAHFAs. Has an essential role in the complete digestion of dietary lipids and their intestinal absorption, along with the absorption of fat-soluble vitamins. The sequence is that of Bile salt-activated lipase (Cel) from Rattus norvegicus (Rat).